Reading from the N-terminus, the 323-residue chain is MASEGLAGALASVLAGQGSSVHSCDSAPAGEPPAPVRLRKNVCYVVLAVFLSEQDEVLLIQEAKRECRGSWYLPAGRMEPGETIVEALQREVKEEAGLHCEPETLLSVEERGPSWVRFVFLARPTGGILKTSKEADAESLQAAWYPRTSLPTPLRAHDILHLVELAAQYRQQARHPLILPQELPCDLVCQRLVATFTSAQTVWVLVGTVGMPHLPVTACGLDPMEQRGGMKMAVLRLLQECLTLHHLVVEIKGLLGLQHLGRDHSDGICLNVLVTVAFRSPGIQDEPPKVRGENFSWWKVMEEDLQSQLLQRLQGSSVVPVNR.

Positions 37 to 167 (RLRKNVCYVV…DILHLVELAA (131 aa)) constitute a Nudix hydrolase domain. Leucine 58 contributes to the Mg(2+) binding site. Residues 76–97 (GRMEPGETIVEALQREVKEEAG) carry the Nudix box motif.

The protein belongs to the Nudix hydrolase family. Mn(2+) serves as cofactor. Mg(2+) is required as a cofactor.

The enzyme catalyses 8-oxo-dGDP + H2O = 8-oxo-dGMP + phosphate + H(+). It catalyses the reaction 8-oxo-dADP + H2O = 8-oxo-dAMP + phosphate + H(+). It carries out the reaction 2-oxo-dADP + H2O = 2-oxo-dAMP + phosphate + H(+). The catalysed reaction is 8-oxo-GDP + H2O = 8-oxo-GMP + phosphate + H(+). Mediates the hydrolysis of oxidized nucleoside diphosphate derivatives. Hydrolyzes 8-oxo-7,8-dihydroguanine (8-oxo-Gua)-containing deoxyribo- and ribonucleoside diphosphates to the monophosphates. Hydrolyzes 8-oxo-dGDP and 8-oxo-GDP with the same efficiencies. Also hydrolyzes 8-OH-dADP and 2-OH-dADP. Exhibited no or minimal hydrolysis activity against 8-oxo-dGTP, 8-oxo-GTP, dGTP, GTP, dGDP and GDP. Probably removes oxidized guanine nucleotides from both the DNA and RNA precursor pools. In Homo sapiens (Human), this protein is 8-oxo-dGDP phosphatase NUDT18.